A 132-amino-acid polypeptide reads, in one-letter code: D-ribose pyranase (132 aa).

His-20 acts as the Proton donor in catalysis. Substrate contacts are provided by residues Asp-28, His-99, and 121-123; that span reads YSN.

Belongs to the RbsD / FucU family. RbsD subfamily. Homodecamer.

Its subcellular location is the cytoplasm. It catalyses the reaction beta-D-ribopyranose = beta-D-ribofuranose. It functions in the pathway carbohydrate metabolism; D-ribose degradation; D-ribose 5-phosphate from beta-D-ribopyranose: step 1/2. Functionally, catalyzes the interconversion of beta-pyran and beta-furan forms of D-ribose. This chain is D-ribose pyranase, found in Streptococcus agalactiae serotype Ia (strain ATCC 27591 / A909 / CDC SS700).